We begin with the raw amino-acid sequence, 417 residues long: Tyrosine--tRNA ligase (417 aa).

An L-tyrosine-binding site is contributed by tyrosine 39. The 'HIGH' region motif lies at 44–53 (PTASSLHAGS). L-tyrosine-binding residues include tyrosine 176 and glutamine 180. Residues 236–240 (KMGKS) carry the 'KMSKS' region motif. Lysine 239 serves as a coordination point for ATP. Residues 350–417 (AGLLALLVQA…KKKHVLIKPL (68 aa)) enclose the S4 RNA-binding domain.

This sequence belongs to the class-I aminoacyl-tRNA synthetase family. TyrS type 1 subfamily. As to quaternary structure, homodimer.

It localises to the cytoplasm. The enzyme catalyses tRNA(Tyr) + L-tyrosine + ATP = L-tyrosyl-tRNA(Tyr) + AMP + diphosphate + H(+). Its function is as follows. Catalyzes the attachment of tyrosine to tRNA(Tyr) in a two-step reaction: tyrosine is first activated by ATP to form Tyr-AMP and then transferred to the acceptor end of tRNA(Tyr). This Bartonella quintana (strain Toulouse) (Rochalimaea quintana) protein is Tyrosine--tRNA ligase.